Consider the following 399-residue polypeptide: MPFPLNRTDTALVISPSEFRIIGIFISICCIIGVLGNLLIIIVFAKRRSVRRPINFFVLNLAVSDLIVALLGYPMTAASAFSNRWIFDNIGCKIYAFLCFNSGVISIMTHAALSFCRYIIICQYGYRKKITQTTVLRTLFSIWSFAMFWTLSPLFGWSSYVIEVVPVSCSVNWYGHGLGDVSYTISVIVAVYVFPLSIIVFSYGMILQEKVCKDSRKNGIRAQQRYTPRFIQDIEQRVTFISFLMMAAFMVAWTPYAIMSALAIGSFNVENSFAALPTLFAKASCAYNPFIYAFTNANFRDTVVEIMAPWTTRRVGVSTLPWPQVTYYPRRRTSAVNTTDIEFPDDNIFIVNSSVNGPTVKREKIVQRNPINVRLGIKIEPRDSRAATENTFTADFSVI.

Over 1–17 (MPFPLNRTDTALVISPS) the chain is Extracellular. N-linked (GlcNAc...) asparagine glycosylation occurs at asparagine 6. Residues 18–43 (EFRIIGIFISICCIIGVLGNLLIIIV) traverse the membrane as a helical segment. Residues 44-55 (FAKRRSVRRPIN) lie on the Cytoplasmic side of the membrane. A helical transmembrane segment spans residues 56–81 (FFVLNLAVSDLIVALLGYPMTAASAF). At 82–95 (SNRWIFDNIGCKIY) the chain is on the extracellular side. An intrachain disulfide couples cysteine 92 to cysteine 169. The helical transmembrane segment at 96-115 (AFLCFNSGVISIMTHAALSF) threads the bilayer. The Cytoplasmic segment spans residues 116-134 (CRYIIICQYGYRKKITQTT). Residues 135–158 (VLRTLFSIWSFAMFWTLSPLFGWS) traverse the membrane as a helical segment. The Extracellular portion of the chain corresponds to 159-182 (SYVIEVVPVSCSVNWYGHGLGDVS). The chain crosses the membrane as a helical span at residues 183–210 (YTISVIVAVYVFPLSIIVFSYGMILQEK). Topologically, residues 211 to 240 (VCKDSRKNGIRAQQRYTPRFIQDIEQRVTF) are cytoplasmic. A helical membrane pass occupies residues 241-263 (ISFLMMAAFMVAWTPYAIMSALA). Topologically, residues 264–271 (IGSFNVEN) are extracellular. The chain crosses the membrane as a helical span at residues 272–295 (SFAALPTLFAKASCAYNPFIYAFT). Residue lysine 282 is modified to N6-(retinylidene)lysine. The Cytoplasmic portion of the chain corresponds to 296–399 (NANFRDTVVE…NTFTADFSVI (104 aa)).

Belongs to the G-protein coupled receptor 1 family. Opsin subfamily. Phosphorylated on some or all of the serine and threonine residues present in the C-terminal region. As to expression, retina. Expressed in the hyperpolarizing cell layer of the photoreceptor cells with its photoreceptive region adjacent to the lens.

Its subcellular location is the membrane. In terms of biological role, visual pigments are the light-absorbing molecules that mediate vision. They consist of an apoprotein, opsin, covalently linked to cis-retinal. This is Rhodopsin, G0-coupled (SCOP2) from Mizuhopecten yessoensis (Japanese scallop).